Reading from the N-terminus, the 237-residue chain is MIKRSAVVLMAVILTGCGNKTLEEVGNAPAMSPVGSGLRYNQAPQLASYPKQTKAVSNGYSLWNDSQAALFKDSRAINVGDLLTVNISIADKAKFKNDTSRSRKNSTSLTWSTVINLFGITPPDSSGDMSTDSNSSSDGKGSVDRSETLTLMVAAVVTSILENGNLLISGSQEVRVNHEVRILNVAGIVRPQDVDAKNTISYEKIAEARISYGGKGRLTEVQQPPVGQQVVDMFSPF.

The signal sequence occupies residues 1–16 (MIKRSAVVLMAVILTG). The N-palmitoyl cysteine moiety is linked to residue Cys17. Cys17 carries S-diacylglycerol cysteine lipidation. A disordered region spans residues 122–143 (PPDSSGDMSTDSNSSSDGKGSV). Over residues 124–140 (DSSGDMSTDSNSSSDGK) the composition is skewed to low complexity.

This sequence belongs to the FlgH family. As to quaternary structure, the basal body constitutes a major portion of the flagellar organelle and consists of four rings (L,P,S, and M) mounted on a central rod.

Its subcellular location is the cell outer membrane. It localises to the bacterial flagellum basal body. Functionally, assembles around the rod to form the L-ring and probably protects the motor/basal body from shearing forces during rotation. This chain is Flagellar L-ring protein, found in Allorhizobium ampelinum (strain ATCC BAA-846 / DSM 112012 / S4) (Agrobacterium vitis (strain S4)).